The primary structure comprises 207 residues: Probable molybdenum cofactor guanylyltransferase (207 aa).

Residues 9-11, Lys-21, and Asp-97 each bind GTP; that span reads LAG. Position 97 (Asp-97) interacts with Mg(2+).

This sequence belongs to the MobA family. Requires Mg(2+) as cofactor.

Its subcellular location is the cytoplasm. It carries out the reaction Mo-molybdopterin + GTP + H(+) = Mo-molybdopterin guanine dinucleotide + diphosphate. Its function is as follows. Transfers a GMP moiety from GTP to Mo-molybdopterin (Mo-MPT) cofactor (Moco or molybdenum cofactor) to form Mo-molybdopterin guanine dinucleotide (Mo-MGD) cofactor. This chain is Probable molybdenum cofactor guanylyltransferase, found in Nostoc sp. (strain PCC 7120 / SAG 25.82 / UTEX 2576).